A 519-amino-acid chain; its full sequence is 2-isopropylmalate synthase (519 aa).

The Pyruvate carboxyltransferase domain occupies 5-267 (VIIFDTTLRD…YTNIHHHEIY (263 aa)). Asp14, His202, His204, and Asn238 together coordinate Mn(2+). A regulatory domain region spans residues 392-519 (ALESFHIHST…NHKNTQHIKK (128 aa)).

It belongs to the alpha-IPM synthase/homocitrate synthase family. LeuA type 1 subfamily. In terms of assembly, homodimer. It depends on Mn(2+) as a cofactor.

The protein resides in the cytoplasm. It carries out the reaction 3-methyl-2-oxobutanoate + acetyl-CoA + H2O = (2S)-2-isopropylmalate + CoA + H(+). It participates in amino-acid biosynthesis; L-leucine biosynthesis; L-leucine from 3-methyl-2-oxobutanoate: step 1/4. Its function is as follows. Catalyzes the condensation of the acetyl group of acetyl-CoA with 3-methyl-2-oxobutanoate (2-ketoisovalerate) to form 3-carboxy-3-hydroxy-4-methylpentanoate (2-isopropylmalate). The protein is 2-isopropylmalate synthase of Blochmanniella floridana.